The chain runs to 579 residues: Probable serine/threonine-protein kinase kinY (579 aa).

The segment at Met-1–Ser-24 is disordered. Residues Leu-32 to Phe-309 enclose the Protein kinase domain. Residues Ile-38–Val-46 and Lys-59 each bind ATP. Asp-167 functions as the Proton acceptor in the catalytic mechanism.

This sequence belongs to the protein kinase superfamily. TKL Ser/Thr protein kinase family.

It carries out the reaction L-seryl-[protein] + ATP = O-phospho-L-seryl-[protein] + ADP + H(+). It catalyses the reaction L-threonyl-[protein] + ATP = O-phospho-L-threonyl-[protein] + ADP + H(+). This chain is Probable serine/threonine-protein kinase kinY (kinY), found in Dictyostelium discoideum (Social amoeba).